Consider the following 124-residue polypeptide: Small ribosomal subunit protein bS6 (124 aa).

This sequence belongs to the bacterial ribosomal protein bS6 family.

Functionally, binds together with bS18 to 16S ribosomal RNA. The protein is Small ribosomal subunit protein bS6 of Campylobacter lari (strain RM2100 / D67 / ATCC BAA-1060).